Consider the following 231-residue polypeptide: High-affinity zinc uptake system ATP-binding protein ZnuC (231 aa).

The region spanning 4–230 is the ABC transporter domain; the sequence is VSLKDIVFGY…CLTWNSCDEL (227 aa).

The protein belongs to the ABC transporter superfamily. In terms of assembly, the complex is composed of two ATP-binding proteins (ZnuC), two transmembrane proteins (ZnuB) and a solute-binding protein (ZnuA).

It is found in the cell membrane. The enzyme catalyses Zn(2+)(out) + ATP(in) + H2O(in) = Zn(2+)(in) + ADP(in) + phosphate(in) + H(+)(in). Part of the high-affinity ABC transporter complex ZnuABC involved in zinc import. Responsible for energy coupling to the transport system. ZnuABC-mediated zinc transport is required for comF expression and competence development. In Bacillus subtilis (strain 168), this protein is High-affinity zinc uptake system ATP-binding protein ZnuC (znuC).